The sequence spans 437 residues: Methylenetetrahydrofolate--tRNA-(uracil-5-)-methyltransferase TrmFO (437 aa).

9–14 (GGGLAG) serves as a coordination point for FAD.

The protein belongs to the MnmG family. TrmFO subfamily. FAD serves as cofactor.

It is found in the cytoplasm. It carries out the reaction uridine(54) in tRNA + (6R)-5,10-methylene-5,6,7,8-tetrahydrofolate + NADH + H(+) = 5-methyluridine(54) in tRNA + (6S)-5,6,7,8-tetrahydrofolate + NAD(+). The enzyme catalyses uridine(54) in tRNA + (6R)-5,10-methylene-5,6,7,8-tetrahydrofolate + NADPH + H(+) = 5-methyluridine(54) in tRNA + (6S)-5,6,7,8-tetrahydrofolate + NADP(+). Its function is as follows. Catalyzes the folate-dependent formation of 5-methyl-uridine at position 54 (M-5-U54) in all tRNAs. The chain is Methylenetetrahydrofolate--tRNA-(uracil-5-)-methyltransferase TrmFO from Moorella thermoacetica (strain ATCC 39073 / JCM 9320).